Here is a 350-residue protein sequence, read N- to C-terminus: NAD-dependent protein deacetylase sirtuin-2 (350 aa).

The Nuclear export signal signature appears at 4–14 (LRNLFTQTLGL). S16 carries the post-translational modification Phosphoserine. The Deacetylase sirtuin-type domain occupies 20-301 (RLLDELTLEG…LALADLLGWK (282 aa)). Residues 48 to 52 (AGIST) and 58 to 60 (DFR) each bind NAD(+). Position 63 is a phosphoserine (S63). Position 130–133 (130–133 (QNID)) interacts with NAD(+). The active-site Proton acceptor is the H150. Zn(2+) contacts are provided by C158 and C163. S170 is modified (phosphoserine). Zn(2+) is bound by residues C184 and C187. NAD(+)-binding positions include 225-226 (TS), 249-251 (NKE), and C287. Positions 312-350 (ANIDAQSGSQASNPSATVSPRKSPPPAKEAARTKEKEEH) are disordered. Over residues 315 to 331 (DAQSGSQASNPSATVSP) the composition is skewed to polar residues. S330 and S334 each carry phosphoserine. The span at 340-350 (EAARTKEKEEH) shows a compositional bias: basic and acidic residues.

This sequence belongs to the sirtuin family. Class I subfamily. As to quaternary structure, interacts with CDC20, FOXO3 and FZR1. Associates with microtubules in primary cortical mature neurons. Homotrimer. Interacts (via both phosphorylated, unphosphorylated, active or inactive forms) with HDAC6; the interaction is necessary for the complex to interact with alpha-tubulin, suggesting that these proteins belong to a large complex that deacetylates the cytoskeleton. Interacts with FOXO1; the interaction is disrupted upon serum-starvation or oxidative stress, leading to increased level of acetylated FOXO1 and induction of autophagy. Interacts with RELA; the interaction occurs in the cytoplasm and is increased in a TNF-alpha-dependent manner. Interacts with HOXA10; the interaction is direct. Interacts with YWHAB and YWHAG; the interactions occur in a AKT-dependent manner and increase SIRT2-dependent TP53 deacetylation. Interacts with MAPK1/ERK2 and MAPK3/ERK1; the interactions increase SIRT2 stability and deacetylation activity. Interacts (phosphorylated form) with KMT5A isoform 2; the interaction is direct, stimulates KMT5A-mediated methyltransferase activity on histone at 'Lys-20' (H4K20me1) and is increased in a H(2)O(2)-induced oxidative stress-dependent manner. Interacts with G6PD; the interaction is enhanced by H(2)O(2) treatment. Interacts with a G1/S-specific cyclin E-CDK2 complex. Interacts with AURKA, CDK5R1 (p35 form) and CDK5 and HIF1A. Interacts with the tRNA ligase SARS1; recruited to the VEGFA promoter via interaction with SARS1. Interacts with BEX4; negatively regulates alpha-tubulin deacetylation by SIRT2. Zn(2+) serves as cofactor. In terms of processing, phosphorylated at phosphoserine and phosphothreonine. Phosphorylated at Ser-330 by a mitotic kinase CDK1/cyclin B at the G2/M transition; phosphorylation regulates the delay in cell-cycle progression. Phosphorylated at Ser-330 by a mitotic kinase G1/S-specific cyclin E/Cdk2 complex; phosphorylation inactivates SIRT2-mediated alpha-tubulin deacetylation and thereby negatively regulates cell adhesion, cell migration and neurite outgrowth during neuronal differentiation. Phosphorylated by cyclin A/Cdk2 and p35-Cdk5 complexes and to a lesser extent by the cyclin D3/Cdk4 and cyclin B/Cdk1, in vitro. Dephosphorylated at Ser-330 by CDC14A and CDC14B around early anaphase. Acetylated by EP300; acetylation leads both to the decreased of SIRT2-mediated alpha-tubulin deacetylase activity and SIRT2-mediated down-regulation of TP53 transcriptional activity. Post-translationally, ubiquitinated. As to expression, expressed in the cerebellum, cerebral cortex and cervival spinal cord. Expressed in Purkinje cells, oligodendrocytes and Schwann cells (at protein level). Expressed in the central nervous system (CNS).

The protein resides in the nucleus. The protein localises to the cytoplasm. Its subcellular location is the perinuclear region. It is found in the cytoskeleton. It localises to the microtubule organizing center. The protein resides in the centrosome. The protein localises to the centriole. Its subcellular location is the spindle. It is found in the midbody. It localises to the chromosome. The protein resides in the perikaryon. The protein localises to the cell projection. Its subcellular location is the growth cone. It is found in the myelin membrane. It carries out the reaction N(6)-acetyl-L-lysyl-[protein] + NAD(+) + H2O = 2''-O-acetyl-ADP-D-ribose + nicotinamide + L-lysyl-[protein]. The enzyme catalyses N(6)-tetradecanoyl-L-lysyl-[protein] + NAD(+) + H2O = 2''-O-tetradecanoyl-ADP-D-ribose + nicotinamide + L-lysyl-[protein]. It catalyses the reaction N(6)-hexadecanoyl-L-lysyl-[protein] + NAD(+) + H2O = 2''-O-hexadecanoyl-ADP-D-ribose + nicotinamide + L-lysyl-[protein]. Inhibited by Sirtinol, A3 and M15 small molecules. Inhibited by nicotinamide. Inhibited by a macrocyclic peptide inhibitor S2iL5. Inhibited by EP300-induced acetylation. NAD-dependent protein deacetylase, which deacetylates internal lysines on histone and alpha-tubulin as well as many other proteins such as key transcription factors. Participates in the modulation of multiple and diverse biological processes such as cell cycle control, genomic integrity, microtubule dynamics, cell differentiation, metabolic networks, and autophagy. Plays a major role in the control of cell cycle progression and genomic stability. Functions in the antephase checkpoint preventing precocious mitotic entry in response to microtubule stress agents, and hence allowing proper inheritance of chromosomes. Positively regulates the anaphase promoting complex/cyclosome (APC/C) ubiquitin ligase complex activity by deacetylating CDC20 and FZR1, then allowing progression through mitosis. Associates both with chromatin at transcriptional start sites (TSSs) and enhancers of active genes. Plays a role in cell cycle and chromatin compaction through epigenetic modulation of the regulation of histone H4 'Lys-20' methylation (H4K20me1) during early mitosis. Specifically deacetylates histone H4 at 'Lys-16' (H4K16ac) between the G2/M transition and metaphase enabling H4K20me1 deposition by KMT5A leading to ulterior levels of H4K20me2 and H4K20me3 deposition throughout cell cycle, and mitotic S-phase progression. Deacetylates KMT5A modulating KMT5A chromatin localization during the mitotic stress response. Also deacetylates histone H3 at 'Lys-57' (H3K56ac) during the mitotic G2/M transition. During oocyte meiosis progression, may deacetylate histone H4 at 'Lys-16' (H4K16ac) and alpha-tubulin, regulating spindle assembly and chromosome alignment by influencing microtubule dynamics and kinetochore function. Deacetylates histone H4 at 'Lys-16' (H4K16ac) at the VEGFA promoter and thereby contributes to regulate expression of VEGFA, a key regulator of angiogenesis. Deacetylates alpha-tubulin at 'Lys-40' and hence controls neuronal motility, oligodendroglial cell arbor projection processes and proliferation of non-neuronal cells. Phosphorylation at Ser-368 by a G1/S-specific cyclin E-CDK2 complex inactivates SIRT2-mediated alpha-tubulin deacetylation, negatively regulating cell adhesion, cell migration and neurite outgrowth during neuronal differentiation. Deacetylates PARD3 and participates in the regulation of Schwann cell peripheral myelination formation during early postnatal development and during postinjury remyelination. Involved in several cellular metabolic pathways. Plays a role in the regulation of blood glucose homeostasis by deacetylating and stabilizing phosphoenolpyruvate carboxykinase PCK1 activity in response to low nutrient availability. Acts as a key regulator in the pentose phosphate pathway (PPP) by deacetylating and activating the glucose-6-phosphate G6PD enzyme, and therefore, stimulates the production of cytosolic NADPH to counteract oxidative damage. Maintains energy homeostasis in response to nutrient deprivation as well as energy expenditure by inhibiting adipogenesis and promoting lipolysis. Attenuates adipocyte differentiation by deacetylating and promoting FOXO1 interaction to PPARG and subsequent repression of PPARG-dependent transcriptional activity. Plays a role in the regulation of lysosome-mediated degradation of protein aggregates by autophagy in neuronal cells. Deacetylates FOXO1 in response to oxidative stress or serum deprivation, thereby negatively regulating FOXO1-mediated autophagy. Deacetylates a broad range of transcription factors and co-regulators regulating target gene expression. Deacetylates transcriptional factor FOXO3 stimulating the ubiquitin ligase SCF(SKP2)-mediated FOXO3 ubiquitination and degradation. Deacetylates HIF1A and therefore promotes HIF1A degradation and inhibition of HIF1A transcriptional activity in tumor cells in response to hypoxia. Deacetylates RELA in the cytoplasm inhibiting NF-kappaB-dependent transcription activation upon TNF-alpha stimulation. Inhibits transcriptional activation by deacetylating p53/TP53 and EP300. Also deacetylates EIF5A. Functions as a negative regulator on oxidative stress-tolerance in response to anoxia-reoxygenation conditions. Plays a role as tumor suppressor. In addition to protein deacetylase activity, also has activity toward long-chain fatty acyl groups and mediates protein-lysine demyristoylation and depalmitoylation of target proteins, such as ARF6 and KRAS, thereby regulating their association with membranes. The polypeptide is NAD-dependent protein deacetylase sirtuin-2 (Sirt2) (Rattus norvegicus (Rat)).